A 238-amino-acid polypeptide reads, in one-letter code: MGKRLISQNRGRGTPTYRAPSHKYKADLRHPRVDENSSLRGEVVGIEHDPARSAPIAKVAFENGEELFLLASEGIAVGNIIECGDDAEVKPGNIVPIGNVPEGFFICNVESKPNDGGKFVRSSGVYATVVTHEATRTAVSMPSGNIKWLNPKCRAVVGIVAGSGRVDRPWLKAGKKYHKMKTRAAKYPRVSAVAMNPRDHPFGGGAWKHPGKPTTVSRNAPPGRKVGLIAARRTGMKR.

A compositionally biased stretch (polar residues) spans 1 to 11; that stretch reads MGKRLISQNRG. Disordered regions lie at residues 1–22 and 202–223; these read MGKRLISQNRGRGTPTYRAPSH and FGGGAWKHPGKPTTVSRNAPPG.

Belongs to the universal ribosomal protein uL2 family. As to quaternary structure, part of the 50S ribosomal subunit. Forms a bridge to the 30S subunit in the 70S ribosome.

In terms of biological role, one of the primary rRNA binding proteins. Required for association of the 30S and 50S subunits to form the 70S ribosome, for tRNA binding and peptide bond formation. It has been suggested to have peptidyltransferase activity; this is somewhat controversial. Makes several contacts with the 16S rRNA in the 70S ribosome. This Methanosarcina acetivorans (strain ATCC 35395 / DSM 2834 / JCM 12185 / C2A) protein is Large ribosomal subunit protein uL2.